Reading from the N-terminus, the 853-residue chain is Transcription factor CPH2 (853 aa).

Disordered stretches follow at residues 165–209 (EPPI…DKNS) and 296–353 (NMNP…VHHP). Low complexity predominate over residues 180–194 (TTTVSSTNSITNTTK). Residues 205-274 (KDKNSHNMIE…TKATEYIKHL (70 aa)) enclose the bHLH domain. The span at 301 to 315 (SLPPPPQQMQAPPQP) shows a compositional bias: pro residues. Low complexity predominate over residues 330 to 352 (TPASQYPSPQQQVSPTQQQTVHH).

It is found in the nucleus. In terms of biological role, transcription factor that positively controls filamentous growth, virulence, and invasiveness. Binds directly to the two SRE-1-like elements upstream of TEC1 and thus positively regulates expression of this important hyphal growth regulator. Functions independently of known signaling cascades involving EFG1. Also regulates gene expression during intestinal colonization but is not involved in host cell adhesion. The polypeptide is Transcription factor CPH2 (CPH2) (Candida albicans (strain SC5314 / ATCC MYA-2876) (Yeast)).